Consider the following 272-residue polypeptide: Shikimate dehydrogenase (NADP(+)) (272 aa).

Shikimate is bound by residues 14–16 (SKS) and Thr-61. Residue Lys-65 is the Proton acceptor of the active site. An NADP(+)-binding site is contributed by Glu-77. Shikimate-binding residues include Asn-86 and Asp-102. NADP(+)-binding positions include 126–130 (GAGGA), 149–154 (NRTVSR), and Met-213. Residue Tyr-215 participates in shikimate binding. Gly-237 is an NADP(+) binding site.

This sequence belongs to the shikimate dehydrogenase family. As to quaternary structure, homodimer.

The catalysed reaction is shikimate + NADP(+) = 3-dehydroshikimate + NADPH + H(+). Its pathway is metabolic intermediate biosynthesis; chorismate biosynthesis; chorismate from D-erythrose 4-phosphate and phosphoenolpyruvate: step 4/7. In terms of biological role, involved in the biosynthesis of the chorismate, which leads to the biosynthesis of aromatic amino acids. Catalyzes the reversible NADPH linked reduction of 3-dehydroshikimate (DHSA) to yield shikimate (SA). In Escherichia coli O81 (strain ED1a), this protein is Shikimate dehydrogenase (NADP(+)).